Here is a 168-residue protein sequence, read N- to C-terminus: MKKSIFSKKLLVSFGSLVTLAAIPLIAISCGQTNTDQSQQPGSGSTTGGQSGTTTGTDSTTGGQTGSESGTTTGGQTGTTTGGQSDSTSTSKEQGSSDSTSTSKEQGSSDSTSTSKEQGSSDSTSTSKEQGSSDSTSTSKEQGSSDSTSTSKEQGSSDSTSTSNMNTR.

A signal peptide spans 1 to 29 (MKKSIFSKKLLVSFGSLVTLAAIPLIAIS). Residue Cys30 is the site of N-palmitoyl cysteine attachment. Residue Cys30 is the site of S-diacylglycerol cysteine attachment. The segment at 33–168 (TNTDQSQQPG…STSTSNMNTR (136 aa)) is disordered. 2 stretches are compositionally biased toward low complexity: residues 35–44 (TDQSQQPGSG) and 52–71 (GTTT…ESGT). Over residues 72–81 (TTGGQTGTTT) the composition is skewed to gly residues. Tandem repeats lie at residues 81–92 (TGGQSDSTSTSK), 93–104 (EQGSSDSTSTSK), 105–116 (EQGSSDSTSTSK), 117–128 (EQGSSDSTSTSK), 129–140 (EQGSSDSTSTSK), 141–152 (EQGSSDSTSTSK), and 153–164 (EQGSSDSTSTSN). The interval 81-164 (TGGQSDSTST…GSSDSTSTSN (84 aa)) is 7 X 12 AA tandem repeats. The span at 82–168 (GGQSDSTSTS…STSTSNMNTR (87 aa)) shows a compositional bias: low complexity.

The protein resides in the cell membrane. In terms of biological role, responsible for the antigenic diversity for host adaptation. Expression in E.coli of a construct containing vlpD, vlpE, and vlpF yields antigenically distinguishable products corresponding to each gene. This is Variant surface antigen D (vlpD) from Mesomycoplasma hyorhinis (Mycoplasma hyorhinis).